Consider the following 198-residue polypeptide: ATP-dependent Clp protease proteolytic subunit (198 aa).

Serine 98 (nucleophile) is an active-site residue. Histidine 123 is an active-site residue.

Belongs to the peptidase S14 family. Fourteen ClpP subunits assemble into 2 heptameric rings which stack back to back to give a disk-like structure with a central cavity, resembling the structure of eukaryotic proteasomes.

The protein localises to the cytoplasm. It catalyses the reaction Hydrolysis of proteins to small peptides in the presence of ATP and magnesium. alpha-casein is the usual test substrate. In the absence of ATP, only oligopeptides shorter than five residues are hydrolyzed (such as succinyl-Leu-Tyr-|-NHMec, and Leu-Tyr-Leu-|-Tyr-Trp, in which cleavage of the -Tyr-|-Leu- and -Tyr-|-Trp bonds also occurs).. Its function is as follows. Cleaves peptides in various proteins in a process that requires ATP hydrolysis. Has a chymotrypsin-like activity. Plays a major role in the degradation of misfolded proteins. The polypeptide is ATP-dependent Clp protease proteolytic subunit (Listeria innocua serovar 6a (strain ATCC BAA-680 / CLIP 11262)).